The following is an 870-amino-acid chain: Valine--tRNA ligase (870 aa).

The short motif at 42–52 is the 'HIGH' region element; that stretch reads PNVTGVLHIGH. The short motif at 527 to 531 is the 'KMSKS' region element; sequence KMSKS. K530 contacts ATP. Positions 800 to 870 form a coiled coil; that stretch reads LENVDLSGIL…ISVELQNLRG (71 aa).

It belongs to the class-I aminoacyl-tRNA synthetase family. ValS type 1 subfamily. In terms of assembly, monomer.

The protein localises to the cytoplasm. The enzyme catalyses tRNA(Val) + L-valine + ATP = L-valyl-tRNA(Val) + AMP + diphosphate. Functionally, catalyzes the attachment of valine to tRNA(Val). As ValRS can inadvertently accommodate and process structurally similar amino acids such as threonine, to avoid such errors, it has a 'posttransfer' editing activity that hydrolyzes mischarged Thr-tRNA(Val) in a tRNA-dependent manner. The protein is Valine--tRNA ligase of Campylobacter jejuni (strain RM1221).